We begin with the raw amino-acid sequence, 300 residues long: Cation-efflux pump FieF (300 aa).

Residues 24–44 (LLIKIFAWWYTGSVSILAALV) traverse the membrane as a helical segment. Zn(2+)-binding residues include Asp-45 and Asp-49. The next 2 helical transmembrane spans lie at 82–102 (AALA…LTSI) and 114–134 (PGVG…LVTF). Zn(2+) contacts are provided by His-153 and Asp-157. 2 helical membrane-spanning segments follow: residues 156 to 176 (SDVM…YGWH) and 178 to 198 (ADAL…LRMG).

This sequence belongs to the cation diffusion facilitator (CDF) transporter (TC 2.A.4) family. FieF subfamily. Homodimer.

It localises to the cell inner membrane. The enzyme catalyses Zn(2+)(in) + H(+)(out) = Zn(2+)(out) + H(+)(in). It catalyses the reaction Cd(2+)(in) + H(+)(out) = Cd(2+)(out) + H(+)(in). The catalysed reaction is Fe(2+)(in) + H(+)(out) = Fe(2+)(out) + H(+)(in). Its function is as follows. Divalent metal cation transporter which exports Zn(2+), Cd(2+) and possibly Fe(2+). May be involved in zinc and iron detoxification by efflux. The polypeptide is Cation-efflux pump FieF (Salmonella choleraesuis (strain SC-B67)).